The chain runs to 303 residues: Porphobilinogen deaminase (303 aa).

C240 bears the S-(dipyrrolylmethanemethyl)cysteine mark.

The protein belongs to the HMBS family. In terms of assembly, monomer. Requires dipyrromethane as cofactor.

It carries out the reaction 4 porphobilinogen + H2O = hydroxymethylbilane + 4 NH4(+). It functions in the pathway porphyrin-containing compound metabolism; protoporphyrin-IX biosynthesis; coproporphyrinogen-III from 5-aminolevulinate: step 2/4. Tetrapolymerization of the monopyrrole PBG into the hydroxymethylbilane pre-uroporphyrinogen in several discrete steps. The polypeptide is Porphobilinogen deaminase (Stenotrophomonas maltophilia (strain R551-3)).